Reading from the N-terminus, the 431-residue chain is Enolase (431 aa).

Gln-163 contacts (2R)-2-phosphoglycerate. Catalysis depends on Glu-205, which acts as the Proton donor. Mg(2+) contacts are provided by Asp-242, Glu-288, and Asp-315. (2R)-2-phosphoglycerate contacts are provided by Lys-340, Arg-369, Ser-370, and Lys-391. Lys-340 functions as the Proton acceptor in the catalytic mechanism.

The protein belongs to the enolase family. Mg(2+) is required as a cofactor.

It localises to the cytoplasm. The protein localises to the secreted. Its subcellular location is the cell surface. The catalysed reaction is (2R)-2-phosphoglycerate = phosphoenolpyruvate + H2O. It participates in carbohydrate degradation; glycolysis; pyruvate from D-glyceraldehyde 3-phosphate: step 4/5. Its function is as follows. Catalyzes the reversible conversion of 2-phosphoglycerate (2-PG) into phosphoenolpyruvate (PEP). It is essential for the degradation of carbohydrates via glycolysis. This chain is Enolase, found in Bacillus cereus (strain G9842).